Consider the following 503-residue polypeptide: 11-hydroxysugiol 20-monooxygenase (503 aa).

The helical transmembrane segment at 2–22 threads the bilayer; sequence QVLIVASLAFLAAWLVYSRWS. C446 contributes to the heme binding site.

This sequence belongs to the cytochrome P450 family. Heme is required as a cofactor. Highly expressed in roots.

The protein resides in the membrane. It carries out the reaction 11-hydroxysugiol + reduced [NADPH--hemoprotein reductase] + O2 = 11,20-dihydroxysugiol + oxidized [NADPH--hemoprotein reductase] + H2O + H(+). It catalyses the reaction 11-hydroxyferruginol + reduced [NADPH--hemoprotein reductase] + O2 = 11,20-dihydroxyferruginol + oxidized [NADPH--hemoprotein reductase] + H2O + H(+). The protein operates within secondary metabolite biosynthesis; terpenoid biosynthesis. Its function is as follows. Monooxygenase that oxidizes 11-hydroxysugiol to produce 11,20-dihydroxysugiol. Can oxidize 11-hydroxyferruginol to produce 11,20-dihydroxyferruginol. These products are intermediates in tanshinone biosynthesis. This chain is 11-hydroxysugiol 20-monooxygenase, found in Salvia miltiorrhiza (Chinese sage).